A 268-amino-acid polypeptide reads, in one-letter code: Aliphatic sulfonates import ATP-binding protein SsuB 2 (268 aa).

The 222-residue stretch at 15–236 (LAVRKLQKTF…VRGSHRLAAL (222 aa)) folds into the ABC transporter domain. An ATP-binding site is contributed by 47-54 (GRSGCGKS).

This sequence belongs to the ABC transporter superfamily. Aliphatic sulfonates importer (TC 3.A.1.17.2) family. The complex is composed of two ATP-binding proteins (SsuB), two transmembrane proteins (SsuC) and a solute-binding protein (SsuA).

It is found in the cell inner membrane. The enzyme catalyses ATP + H2O + aliphatic sulfonate-[sulfonate-binding protein]Side 1 = ADP + phosphate + aliphatic sulfonateSide 2 + [sulfonate-binding protein]Side 1.. Part of the ABC transporter complex SsuABC involved in aliphatic sulfonates import. Responsible for energy coupling to the transport system. The chain is Aliphatic sulfonates import ATP-binding protein SsuB 2 from Pseudomonas fluorescens (strain ATCC BAA-477 / NRRL B-23932 / Pf-5).